We begin with the raw amino-acid sequence, 610 residues long: DNA mismatch repair protein MutL (610 aa).

The tract at residues 351–406 is disordered; that stretch reads GQRPQAPWSAETSPSRPYQPAPAFSERPQASFDGLSTPTARAEPQFSPDPVSPGLA.

It belongs to the DNA mismatch repair MutL/HexB family.

Functionally, this protein is involved in the repair of mismatches in DNA. It is required for dam-dependent methyl-directed DNA mismatch repair. May act as a 'molecular matchmaker', a protein that promotes the formation of a stable complex between two or more DNA-binding proteins in an ATP-dependent manner without itself being part of a final effector complex. In Rhizobium etli (strain ATCC 51251 / DSM 11541 / JCM 21823 / NBRC 15573 / CFN 42), this protein is DNA mismatch repair protein MutL.